The chain runs to 137 residues: MKGLLTLAWFLACSVPAVPGGLLELKSMIEKVTGKNAFKNYGFYGCYCGWGGRGTPKDGTDWCCQMHDRCYGQLEEKDCAIRTQSYDYRYTNGLVICEHDSFCPMRLCACDRKLVYCLRRNLWTYNPLYQYYPNFLC.

The N-terminal stretch at methionine 1–glycine 20 is a signal peptide. Intrachain disulfides connect cysteine 46-cysteine 137, cysteine 48-cysteine 64, cysteine 63-cysteine 117, cysteine 70-cysteine 110, cysteine 79-cysteine 103, and cysteine 97-cysteine 108. Residues tyrosine 47, glycine 49, and glycine 51 each coordinate Ca(2+). Residue histidine 67 is part of the active site. Residue aspartate 68 participates in Ca(2+) binding. Aspartate 111 is an active-site residue.

Belongs to the phospholipase A2 family. The cofactor is Ca(2+). In terms of processing, this enzyme lacks one of the seven disulfide bonds found in similar PA2 proteins. As to expression, expressed in peritoneal macrophages (at protein level). Expressed in heart, skeletal muscle and white adipose tissue.

The protein localises to the secreted. It localises to the cell membrane. Its subcellular location is the cytoplasmic vesicle. It is found in the phagosome. The protein resides in the recycling endosome. The protein localises to the golgi apparatus. It localises to the cis-Golgi network. Its subcellular location is the trans-Golgi network. The enzyme catalyses a 1,2-diacyl-sn-glycero-3-phosphocholine + H2O = a 1-acyl-sn-glycero-3-phosphocholine + a fatty acid + H(+). It carries out the reaction 1-hexadecanoyl-2-(9Z-octadecenoyl)-sn-glycero-3-phosphocholine + H2O = 1-hexadecanoyl-sn-glycero-3-phosphocholine + (9Z)-octadecenoate + H(+). The catalysed reaction is 1-hexadecanoyl-2-(5Z,8Z,11Z,14Z-eicosatetraenoyl)-sn-glycero-3-phosphocholine + H2O = 1-hexadecanoyl-sn-glycero-3-phosphocholine + (5Z,8Z,11Z,14Z)-eicosatetraenoate + H(+). It catalyses the reaction 1-hexadecanoyl-2-(9Z,12Z-octadecadienoyl)-sn-glycero-3-phosphoethanolamine + H2O = 1-hexadecanoyl-sn-glycero-3-phosphoethanolamine + (9Z,12Z)-octadecadienoate + H(+). The enzyme catalyses 1-hexadecanoyl-2-(5Z,8Z,11Z,14Z-eicosatetraenoyl)-sn-glycero-3-phosphoethanolamine + H2O = 1-hexadecanoyl-sn-glycero-3-phosphoethanolamine + (5Z,8Z,11Z,14Z)-eicosatetraenoate + H(+). It carries out the reaction 1-octadecanoyl-2-(5Z,8Z,11Z,14Z-eicosatetraenoyl)-sn-glycero-3-phospho-(1D-myo-inositol) + H2O = 1-octadecanoyl-sn-glycero-3-phospho-(1D-myo-inositol) + (5Z,8Z,11Z,14Z)-eicosatetraenoate + H(+). The catalysed reaction is 1-hexadecanoyl-2-(9Z-octadecenoyl)-sn-glycero-3-phosphoglycerol + H2O = 1-hexadecanoyl-sn-glycero-3-phosphoglycerol + (9Z)-octadecenoate + H(+). It catalyses the reaction N-hexadecanoyl-1,2-di-(9Z-octadecenoyl)-sn-glycero-3-phosphoethanolamine + H2O = N-hexadecanoyl-1-(9Z-octadecenoyl)-sn-glycero-3-phosphoethanolamine + (9Z)-octadecenoate + H(+). The enzyme catalyses 1'-[1,2-di-(9Z-octadecenoyl)-sn-glycero-3-phospho]-3'-[1-(9Z-octadecenoyl)-sn-glycero-3-phospho]-glycerol + H2O = 1',3'-bis-[1-(9Z-octadecenoyl)-sn-glycero-3-phospho]-glycerol + (9Z)-octadecenoate + H(+). It carries out the reaction 1',3'-bis[1,2-di-(9Z-octadecenoyl)-sn-glycero-3-phospho]-glycerol + H2O = 1'-[1,2-di-(9Z-octadecenoyl)-sn-glycero-3-phospho]-3'-[1-(9Z-octadecenoyl)-sn-glycero-3-phospho]-glycerol + (9Z)-octadecenoate + H(+). The protein operates within lipid metabolism; phospholipid metabolism. It functions in the pathway lipid metabolism; leukotriene B4 biosynthesis. Its pathway is lipid metabolism; leukotriene C4 biosynthesis. Its function is as follows. Secretory calcium-dependent phospholipase A2 that primarily targets extracellular phospholipids. Hydrolyzes the ester bond of the fatty acyl group attached at sn-2 position of phospholipids (phospholipase A2 activity), preferentially releasing fatty acyl groups with a low degree of unsaturation such as oleoyl (C18:1) and linoleoyl (C18:2) groups. Hydrolyzes low-density lipoprotein (LDL) phospholipids releasing unsaturated fatty acids that drive macrophage polarization toward an M2 phenotype. May act in an autocrine and paracrine manner. Contributes to lipid remodeling of cellular membranes at different subcellular locations and generation of lipid mediators involved in pathogen clearance. Cleaves sn-2 fatty acyl chains of cardiolipin, a major component of the inner membrane of mitochondria and bacterial membranes. Promotes phagocytosis of bacteria in macrophages through production of lysophosphatidylethanolamines. Displays bactericidal activity against Gram-positive bacteria by directly hydrolyzing the phospholipids of the bacterial membrane. Promotes phagocytosis and killing of ingested fungi likely through controlling phagosome-lysosome fusion and phagosome maturation. Plays a role in biosynthesis of cysteinyl leukotrienes (CysLTs) in myeloid cells. In eosinophils, triggers perinuclear arachidonate release and LTC4 synthesis in a PLA2G4A-independent way. In neutrophils, amplifies CysLTs biosynthesis initiated by PLA2G4A. Promotes immune complex clearance in macrophages via stimulating synthesis of CysLTs, which act through CYSLTR1 to trigger phagocytosis. May regulate antigen processing in antigen-presenting cells. In pulmonary macrophages regulates IL33 production required for activation of group 2 innate lymphoid cells. May play a role in the biosynthesis of N-acyl ethanolamines that regulate energy metabolism. Hydrolyzes N-acyl phosphatidylethanolamines to N-acyl lysophosphatidylethanolamines, which are further cleaved by a lysophospholipase D to release N-acyl ethanolamines. In Mus musculus (Mouse), this protein is Phospholipase A2 group V (Pla2g5).